Reading from the N-terminus, the 521-residue chain is Protein NRT1/ PTR FAMILY 4.2 (521 aa).

12 helical membrane-spanning segments follow: residues 30–50 (IVCVVVMMENIVFIANGFNFV), 65–85 (ANMVTNFMGTSFLLTLFGGFI), 89–109 (FVTHFTTFIVFCCIELMGLIL), 133–153 (AILFTGLYAMAIGTGGLKASL), 172–192 (FFDWLYFSICSGCLLAVTVVL), 204–224 (FNISVGILATALCIFTVGLPF), 297–317 (FLGLLPIFGSTIVMSCCVAQL), 338–358 (IPVPSLTAIPLIFMLLSIPLY), 381–401 (IGLGLALSSVSMAVSAIVEAK), 413–433 (ISVLWLVFQYLMLSVSDMLTL), 451–471 (ISTALGWCSTALGFFLSTTLV), and 498–518 (LFYVLLCVLNTLNLLNYIFWA).

It belongs to the major facilitator superfamily. Proton-dependent oligopeptide transporter (POT/PTR) (TC 2.A.17) family. Expressed in siliques.

The protein resides in the membrane. Its function is as follows. Involved in abscisic acid transport. The polypeptide is Protein NRT1/ PTR FAMILY 4.2 (NPF4.2) (Arabidopsis thaliana (Mouse-ear cress)).